Reading from the N-terminus, the 336-residue chain is Ketol-acid reductoisomerase (NADP(+)) 1 (336 aa).

The KARI N-terminal Rossmann domain occupies 2 to 181 (AKVYYEKDVT…GATRAGVLET (180 aa)). Residues 25-28 (YGSQ), arginine 48, serine 52, and 82-85 (DELQ) contribute to the NADP(+) site. Histidine 107 is a catalytic residue. Glycine 133 lines the NADP(+) pocket. Residues 182–327 (TFKEETETDL…RKLRGMMPFV (146 aa)) form the KARI C-terminal knotted domain. The Mg(2+) site is built by aspartate 190, glutamate 194, glutamate 226, and glutamate 230. Serine 251 contributes to the substrate binding site.

Belongs to the ketol-acid reductoisomerase family. It depends on Mg(2+) as a cofactor.

It catalyses the reaction (2R)-2,3-dihydroxy-3-methylbutanoate + NADP(+) = (2S)-2-acetolactate + NADPH + H(+). The enzyme catalyses (2R,3R)-2,3-dihydroxy-3-methylpentanoate + NADP(+) = (S)-2-ethyl-2-hydroxy-3-oxobutanoate + NADPH + H(+). The protein operates within amino-acid biosynthesis; L-isoleucine biosynthesis; L-isoleucine from 2-oxobutanoate: step 2/4. It functions in the pathway amino-acid biosynthesis; L-valine biosynthesis; L-valine from pyruvate: step 2/4. In terms of biological role, involved in the biosynthesis of branched-chain amino acids (BCAA). Catalyzes an alkyl-migration followed by a ketol-acid reduction of (S)-2-acetolactate (S2AL) to yield (R)-2,3-dihydroxy-isovalerate. In the isomerase reaction, S2AL is rearranged via a Mg-dependent methyl migration to produce 3-hydroxy-3-methyl-2-ketobutyrate (HMKB). In the reductase reaction, this 2-ketoacid undergoes a metal-dependent reduction by NADPH to yield (R)-2,3-dihydroxy-isovalerate. This Bacillus anthracis protein is Ketol-acid reductoisomerase (NADP(+)) 1.